The chain runs to 20 residues: Endo-1,6-beta-glucanase (20 aa).

Belongs to the glycosyl hydrolase 5 (cellulase A) family.

It is found in the secreted. The protein localises to the extracellular space. It carries out the reaction Random hydrolysis of (1-&gt;6)-linkages in (1-&gt;6)-beta-D-glucans.. In terms of biological role, endo-1,6-beta-glucanase that has highest activity against the beta-1,6-glucan pustulan. Also active against the beta-1,6-glucan lutean. Lower activity against laminarin (beta-1,3-glucan with beta-1,6-branches). Little or no activity against gentiobiose, yeast glucan, lichenin, scleroglucan, curdlan, barley glucan, CM cellulose, HE cellulose, pachyman and pullulan. The sequence is that of Endo-1,6-beta-glucanase from Acremonium sp.